The following is a 66-amino-acid chain: Clusterin (66 aa).

The protein belongs to the clusterin family. In terms of assembly, antiparallel disulfide-linked heterodimer of an alpha chain and a beta chain. Self-associates and forms higher oligomers. Interacts with a broad range of misfolded proteins, including APP, APOC2 and LYZ. Slightly acidic pH promotes interaction with misfolded proteins. Forms high-molecular weight oligomers upon interaction with misfolded proteins. Interacts with APOA1, LRP2, CLUAP1 and PON1. Interacts with the complement membrane attack complex. Interacts (via alpha chain) with XRCC6. Interacts with SYVN1, COMMD1, BTRC, CUL1 and with ubiquitin and SCF (SKP1-CUL1-F-box protein) E3 ubiquitin-protein ligase complexes. Interacts (via alpha chain) with BAX in stressed cells, where BAX undergoes a conformation change leading to association with the mitochondrial membrane. Does not interact with BAX in unstressed cells. Found in a complex with LTF, CLU, EPPIN and SEMG1. Interacts (immaturely glycosylated pre-secreted form) with HSPA5; this interaction promotes CLU stability and facilitates stress-induced CLU retrotranslocation from the secretory pathway to the mitochondria, thereby reducing stress-induced apoptosis by stabilizing mitochondrial membrane integrity. Interacts with BCL2L1; this interaction releases and activates BAX and promotes cell death. Interacts with TGFBR2 and ACVR1. Interacts (secreted form) with STMN3; this interaction may act as an important modulator during neuronal differentiation. Component of a epididymal complex at least composed of soluble form of prion protein PRNP, CLU, BPI, CES5A, MANBA and GLB1. Post-translationally, proteolytically cleaved on its way through the secretory system, probably within the Golgi lumen. Proteolytic cleavage is not necessary for its chaperone activity. All non-secreted forms are not proteolytically cleaved. Chaperone activity of uncleaved forms is dependent on a non-reducing environment. In terms of processing, polyubiquitinated, leading to proteasomal degradation. Under cellular stress, the intracellular level of cleaved form is reduced due to proteasomal degradation. Heavily N-glycosylated. About 30% of the protein mass is comprised of complex N-linked carbohydrate. Endoplasmic reticulum (ER) stress induces changes in glycosylation status and increases level of hypoglycosylated forms. Core carbohydrates are essential for chaperone activity. Non-secreted forms are hypoglycosylated or unglycosylated.

It is found in the secreted. Its subcellular location is the nucleus. The protein localises to the cytoplasm. It localises to the mitochondrion membrane. The protein resides in the cytosol. It is found in the microsome. Its subcellular location is the endoplasmic reticulum. The protein localises to the mitochondrion. It localises to the perinuclear region. The protein resides in the cytoplasmic vesicle. It is found in the secretory vesicle. Its subcellular location is the chromaffin granule. Functions as extracellular chaperone that prevents aggregation of non native proteins. Prevents stress-induced aggregation of blood plasma proteins. Inhibits formation of amyloid fibrils by APP, APOC2, B2M, CALCA, CSN3, SNCA and aggregation-prone LYZ variants (in vitro). Does not require ATP. Maintains partially unfolded proteins in a state appropriate for subsequent refolding by other chaperones, such as HSPA8/HSC70. Does not refold proteins by itself. Binding to cell surface receptors triggers internalization of the chaperone-client complex and subsequent lysosomal or proteasomal degradation. When secreted, protects cells against apoptosis and against cytolysis by complement: inhibits assembly of the complement membrane attack complex (MAC) by preventing polymerization of C9 pore component of the MAC complex. Intracellular forms interact with ubiquitin and SCF (SKP1-CUL1-F-box protein) E3 ubiquitin-protein ligase complexes and promote the ubiquitination and subsequent proteasomal degradation of target proteins. Promotes proteasomal degradation of COMMD1 and IKBKB. Modulates NF-kappa-B transcriptional activity. Following stress, promotes apoptosis. Inhibits apoptosis when associated with the mitochondrial membrane by interference with BAX-dependent release of cytochrome c into the cytoplasm. Plays a role in the regulation of cell proliferation. An intracellular form suppresses stress-induced apoptosis by stabilizing mitochondrial membrane integrity through interaction with HSPA5. Secreted form does not affect caspase or BAX-mediated intrinsic apoptosis and TNF-induced NF-kappa-B-activity. Secreted form act as an important modulator during neuronal differentiation through interaction with STMN3. Plays a role in the clearance of immune complexes that arise during cell injury. In Ovis aries (Sheep), this protein is Clusterin (CLU).